We begin with the raw amino-acid sequence, 233 residues long: Phycoerythrobilin synthase (233 aa).

The protein belongs to the HY2 family.

It catalyses the reaction (3Z)-phycoerythrobilin + 2 oxidized 2[4Fe-4S]-[ferredoxin] = biliverdin IXalpha + 2 reduced 2[4Fe-4S]-[ferredoxin] + 4 H(+). Its function is as follows. Plays a role in phycoerythrobilin biosynthesis, the red pigment chromophore photosynthetically active biliproteins of the host cyanobacteria. Uses a four-electron reduction to carry out the reactions catalyzed by two enzymes (EC 1.3.7.2 and EC 1.3.7.3) in host. In Prochlorococcus, this protein is Phycoerythrobilin synthase (pebS).